Here is a 995-residue protein sequence, read N- to C-terminus: Bifunctional glutamine synthetase adenylyltransferase/adenylyl-removing enzyme (995 aa).

The interval 1–487 (MNVTKPATQR…LHAKLFYQPL (487 aa)) is adenylyl removase. An adenylyl transferase region spans residues 492-995 (APAGLEIAGR…KAVVRKVFGS (504 aa)).

It belongs to the GlnE family. Requires Mg(2+) as cofactor.

It carries out the reaction [glutamine synthetase]-O(4)-(5'-adenylyl)-L-tyrosine + phosphate = [glutamine synthetase]-L-tyrosine + ADP. The enzyme catalyses [glutamine synthetase]-L-tyrosine + ATP = [glutamine synthetase]-O(4)-(5'-adenylyl)-L-tyrosine + diphosphate. Functionally, involved in the regulation of glutamine synthetase GlnA, a key enzyme in the process to assimilate ammonia. When cellular nitrogen levels are high, the C-terminal adenylyl transferase (AT) inactivates GlnA by covalent transfer of an adenylyl group from ATP to specific tyrosine residue of GlnA, thus reducing its activity. Conversely, when nitrogen levels are low, the N-terminal adenylyl removase (AR) activates GlnA by removing the adenylyl group by phosphorolysis, increasing its activity. The regulatory region of GlnE binds the signal transduction protein PII (GlnB) which indicates the nitrogen status of the cell. The polypeptide is Bifunctional glutamine synthetase adenylyltransferase/adenylyl-removing enzyme (Mycobacterium marinum (strain ATCC BAA-535 / M)).